A 335-amino-acid polypeptide reads, in one-letter code: Fructose-1,6-bisphosphatase class 1 (335 aa).

4 residues coordinate Mg(2+): Glu-94, Asp-113, Leu-115, and Asp-116. Substrate is bound by residues 116–119, Asn-208, and Lys-274; that span reads DGSS. Mg(2+) is bound at residue Glu-280.

The protein belongs to the FBPase class 1 family. Homotetramer. It depends on Mg(2+) as a cofactor.

The protein localises to the cytoplasm. It carries out the reaction beta-D-fructose 1,6-bisphosphate + H2O = beta-D-fructose 6-phosphate + phosphate. Its pathway is carbohydrate biosynthesis; gluconeogenesis. The protein is Fructose-1,6-bisphosphatase class 1 of Polynucleobacter asymbioticus (strain DSM 18221 / CIP 109841 / QLW-P1DMWA-1) (Polynucleobacter necessarius subsp. asymbioticus).